The primary structure comprises 463 residues: uncharacterized protein (463 aa).

One can recognise a PE domain in the interval 1 to 93 (MSYMIAVPDM…AGAYASAEAT (93 aa)). Disordered stretches follow at residues 231 to 320 (GGAG…AGNG) and 408 to 463 (NGGD…TPGQ). Residues 408 to 451 (NGGDGGKGGDAQLIGNGGNGGNGGKGGTGLMPGINGTGGAGGSR) are compositionally biased toward gly residues.

The protein belongs to the mycobacterial PE family. PGRS subfamily.

This is an uncharacterized protein from Mycobacterium tuberculosis (strain ATCC 25618 / H37Rv).